The chain runs to 591 residues: Metalloendopeptidase OPG085 (591 aa).

Histidine 41 lines the Zn(2+) pocket. The active site involves glutamate 44. Histidine 45 and glutamate 112 together coordinate Zn(2+).

This sequence belongs to the peptidase M44 family. Requires Zn(2+) as cofactor. Undergoes proteolytic processing during the course of infection. May be cleaved into 46 kDa and 22 kDa products (Potential).

It localises to the virion. Its function is as follows. Probably involved in maturation of some viral proteins by processing them preferentially at Ala-Gly-|-Ser/Thr/Lys motifs. Does not seem to be responsible for the cleavage of major core proteins. The chain is Metalloendopeptidase OPG085 (OPG085) from Monkeypox virus.